Reading from the N-terminus, the 1612-residue chain is MIPHSSAGVQSWGQPLHAVYSGTGRADLSQPLGQPDRQPEQPSMPVPQLQGRPPALIDLTTNDGDVLEREPPAKRLKIDVHAGSVAGDGSPASAGVGESKSTPSATTSKPPSLSWRARPVWSFQALLSEVSGSAEINGESAAGVVQDVKPPPPPSFPGPPWKFAPADTIASDSAGAQDGAPSKEVQTTPYHIETPSVAPVIRGEKVADFSPWMGNHPEDVLNEQTAKQGYYDRTQVSQNESNTARPSLYAQLKHRSGLQILSSVFAAALEKRQGHNMVTAPSTFKPPPRVTLTDNKREAWLRDLANPNVPLRKLSRTIPHGIRGRVLLDQCLTKWVPVGRAVWLAKCVGANEIRAFKRKGTSGALAIGLEAKWVRDWTANVQQFLEGVITSCGVADWKMKMTYAVSLTARLFFEQLLDHDQYLGWFLTSLEAAPFNTLPVWLLMLGIYWSNILRYRKRGRRLAELLLDKLQVAIKSDSATSLRPLTDRLSLHIRKLTLEHTSSMVLPQSWEKYKDLLSSCLDLNDNVHRAVFQNLAERNARVQRPRKCEETTQQPPQQRVIQLFDSIGSSNDITSVSAASLGAIDDKAALVLKLLEWAATPFRYGVSRVYTGARLLRKWKIAGVDVDTSIISFLGESQMRDQLNMDNIYHIVSELVRSQTFSVGKYLQWLMAKGVADFPQNSDHQPLSGDLALLMQLPVSRLPEHVHNLRNTLLHRAGVEVSKESSTIAILKASIAERLPRIFGSVATSAVSRDPLPSDLTWAVKSELGQWIRRGVTEFGRDPRRAFQDLHSAPSAEHFALTPGEFYTVRDILESFGDLSILADVLKQATVCNDGIVLASAADTVNYHFRSFCVIGATTDLFKRLVESYARLKRLGSTSLDLIFSLIDLGLRLPGELNTVALLRQDLSRIESKSSMAAPSPLSDHIPSSFNETDPLFLLKLDQLLSSASGIDESTLDTIFNLLIKQIESSGGHAKLSVNETCRYLSYLRPFHPKRFDIMIVRWICGLLRSTTGGILSQVLPPLIGVGCVTIQAFVFLVRRLLKSENMMSNQRDLRIDLLQLLVPPPAGQSRYFDMVTYRFHLSRKEFLFKHPEEVFDIIRDAIALIDSQSQEGNYRQVDLGHSAMVLLQILLTKNPESAVKHCTEKLIGQHPSAVTVLTRALDSLLGLDTKAGERLFTSNGSFIFITIDTGPAAPDISVAEKVIELTNDFSLPFCRLKLQLLFNAETKGDVRNEIVDVMFKAAVADSRSRRSNWVGLVRLMSHDAVRQIRERAEKNFFAIPLFEESPDGCSSFAADNSSSLETAKLYLAIIEKLAYSIPDVGPQAVVPVLTEKMDLLLQRLITMQANYSGTTELSHGVDAEHMIRSRTQFERALAFWFSALLRMIVLHRTAFSVPSAAVRPSALPEQTRLLISIFCITLARLPDSVLRLFPAADYFPHSMTAGDCRPCPGILLQTHALDVAASLIDTFPDEARHQCARYLREKCPPFARVQNDSRFLYLLGPLGDSPSSNITLPVSIPSPAASGSTPAPTPSGNPTGGFSHPQQPAFVSGVPTGLPDGLNCAASHLCLQYRGRAIGAYPVRPWELLEDAAPIAGTNDTAVSLGYFDARRVRV.

Disordered regions lie at residues 18–114 (AVYS…PSLS) and 1514–1547 (PVSIPSPAASGSTPAPTPSGNPTGGFSHPQQPAF). Residues 66–80 (VLEREPPAKRLKIDV) are compositionally biased toward basic and acidic residues. Composition is skewed to low complexity over residues 99-114 (SKSTPSATTSKPPSLS) and 1518-1538 (PSPAASGSTPAPTPSGNPTGG).

It belongs to the Mediator complex subunit 12 family. Component of the srb8-11 complex, which itself associates with the Mediator complex.

The protein resides in the nucleus. In terms of biological role, component of the srb8-11 complex. The srb8-11 complex is a regulatory module of the Mediator complex which is itself involved in regulation of basal and activated RNA polymerase II-dependent transcription. The srb8-11 complex may be involved in the transcriptional repression of a subset of genes regulated by Mediator. It may inhibit the association of the Mediator complex with RNA polymerase II to form the holoenzyme complex. The chain is Mediator of RNA polymerase II transcription subunit 12 (srb8) from Neosartorya fischeri (strain ATCC 1020 / DSM 3700 / CBS 544.65 / FGSC A1164 / JCM 1740 / NRRL 181 / WB 181) (Aspergillus fischerianus).